Consider the following 209-residue polypeptide: MADS-box transcription factor 2 (209 aa).

One can recognise an MADS-box domain in the interval 1 to 61 (MGRGKIEIKR…GKLYDYCSPK (61 aa)). Positions 84 to 170 (HKSLSAEIDR…AFKLHQQDIA (87 aa)) constitute a K-box domain.

As to expression, highly expressed in anthers and carpels. Expressed in pollen, tapetum and stigma.

It localises to the nucleus. Its function is as follows. Probable transcription factor involved in the development of floral organs. B-class protein required for normal development of lodicules (whorl 2). This chain is MADS-box transcription factor 2 (MADS2), found in Oryza sativa subsp. japonica (Rice).